The chain runs to 356 residues: MHKASSLSELGFDAGGASSGFFRPVADGCPATPTSSAVPHRRLTKISVIGAGNVGMAIAQTILTQNLADEIALVDALPDKLRGEALDLQHAAAFLPRVRISGTDAAVTKNSDLVIVTAGARQIPGETRLNLLQRNVALYRKIVPPVAEHSPDALLLVVSNPVDVLTYVAWKLSGFPASRVIGSGTNLDSSRFRFLIAEHLDVNAQDVQAYMVGEHGDSSVAIWSSISVGGMPAFKSLRDSHRSFDEAALEGIRRAVVGGAYEVIGLKGYTSWAIGYSVASLAASLLRDQRRVHPVSVLASGFHGISDGHEVFLSLPARLGRGGILGVAEMDLTEAEAAQLRRSAKTLWENCQLLDL.

Residues Asp-75–Lys-80 and Arg-121 contribute to the NAD(+) site. Residues Arg-128, Asn-160, and Arg-191 each coordinate substrate. Asn-160 contacts NAD(+). The active-site Proton acceptor is the His-215. Thr-270 serves as a coordination point for substrate.

This sequence belongs to the LDH/MDH superfamily. LDH family. In terms of assembly, tetramer that arise from random association of LDH-A and LDH-B.

The enzyme catalyses (S)-lactate + NAD(+) = pyruvate + NADH + H(+). It functions in the pathway fermentation; pyruvate fermentation to lactate; (S)-lactate from pyruvate: step 1/1. In Hordeum vulgare (Barley), this protein is L-lactate dehydrogenase A.